The following is a 214-amino-acid chain: Probable transaldolase (214 aa).

Lys-83 functions as the Schiff-base intermediate with substrate in the catalytic mechanism.

This sequence belongs to the transaldolase family. Type 3B subfamily.

It is found in the cytoplasm. The catalysed reaction is D-sedoheptulose 7-phosphate + D-glyceraldehyde 3-phosphate = D-erythrose 4-phosphate + beta-D-fructose 6-phosphate. Its pathway is carbohydrate degradation; pentose phosphate pathway; D-glyceraldehyde 3-phosphate and beta-D-fructose 6-phosphate from D-ribose 5-phosphate and D-xylulose 5-phosphate (non-oxidative stage): step 2/3. Its function is as follows. Transaldolase is important for the balance of metabolites in the pentose-phosphate pathway. This chain is Probable transaldolase, found in Leptospira interrogans serogroup Icterohaemorrhagiae serovar copenhageni (strain Fiocruz L1-130).